A 1047-amino-acid chain; its full sequence is Isoleucine--tRNA ligase (1047 aa).

Positions 52–62 match the 'HIGH' region motif; it reads PTANGMPGAHH. The short motif at 600 to 604 is the 'KMSKS' region element; the sequence is KMSKH. An ATP-binding site is contributed by Lys603.

It belongs to the class-I aminoacyl-tRNA synthetase family. IleS type 2 subfamily. In terms of assembly, monomer. The cofactor is Zn(2+).

The protein localises to the cytoplasm. It carries out the reaction tRNA(Ile) + L-isoleucine + ATP = L-isoleucyl-tRNA(Ile) + AMP + diphosphate. In terms of biological role, catalyzes the attachment of isoleucine to tRNA(Ile). As IleRS can inadvertently accommodate and process structurally similar amino acids such as valine, to avoid such errors it has two additional distinct tRNA(Ile)-dependent editing activities. One activity is designated as 'pretransfer' editing and involves the hydrolysis of activated Val-AMP. The other activity is designated 'posttransfer' editing and involves deacylation of mischarged Val-tRNA(Ile). The polypeptide is Isoleucine--tRNA ligase (Streptomyces coelicolor (strain ATCC BAA-471 / A3(2) / M145)).